A 156-amino-acid polypeptide reads, in one-letter code: Probable cyclic pyranopterin monophosphate synthase (156 aa).

Residues 74–76 (LCH) and 110–111 (ME) contribute to the substrate site. The active site involves Asp-125.

The protein belongs to the MoaC family. Homohexamer; trimer of dimers.

It carries out the reaction (8S)-3',8-cyclo-7,8-dihydroguanosine 5'-triphosphate = cyclic pyranopterin phosphate + diphosphate. The protein operates within cofactor biosynthesis; molybdopterin biosynthesis. Catalyzes the conversion of (8S)-3',8-cyclo-7,8-dihydroguanosine 5'-triphosphate to cyclic pyranopterin monophosphate (cPMP). In Thermococcus onnurineus (strain NA1), this protein is Probable cyclic pyranopterin monophosphate synthase.